The chain runs to 569 residues: Ribonuclease J (569 aa).

Zn(2+) is bound by residues His-81, His-83, Asp-85, His-86, His-150, and Asp-172. Position 373–377 (373–377) interacts with substrate; it reads HASGH. His-399 contributes to the Zn(2+) binding site.

The protein belongs to the metallo-beta-lactamase superfamily. RNA-metabolizing metallo-beta-lactamase-like family. Bacterial RNase J subfamily. In terms of assembly, homodimer, may be a subunit of the RNA degradosome. The cofactor is Zn(2+).

It localises to the cytoplasm. An RNase that has 5'-3' exonuclease and possibly endoonuclease activity. Involved in maturation of rRNA and in some organisms also mRNA maturation and/or decay. This is Ribonuclease J from Mycoplasma genitalium (strain ATCC 33530 / DSM 19775 / NCTC 10195 / G37) (Mycoplasmoides genitalium).